Consider the following 329-residue polypeptide: T-lymphocyte activation antigen CD86 (329 aa).

A signal peptide spans 1 to 23; that stretch reads MDPQCTMGLSNILFVMAFLLSGA. Over 24–247 the chain is Extracellular; that stretch reads APLKIQAYFN…DPQPPPDHIP (224 aa). N-linked (GlcNAc...) asparagine glycans are attached at residues Asn-33, Asn-47, Asn-135, Asn-146, Asn-154, Asn-177, Asn-192, and Asn-213. An Ig-like V-type domain is found at 33–131; it reads NETADLPCQF…RIHQMNSELS (99 aa). Cysteines 40 and 110 form a disulfide. One can recognise an Ig-like C2-type domain in the interval 150–225; sequence NVYINLTCSS…IFCILETDKT (76 aa). Cys-157 and Cys-218 form a disulfide bridge. Residues 248 to 268 traverse the membrane as a helical segment; the sequence is WITAVLPTVIICVMVFCLILW. At 269–329 the chain is on the cytoplasmic side; it reads KWKKKKRPRN…SSCDKSDTCF (61 aa). The disordered stretch occupies residues 277–329; it reads RNSYKCGTNTMEREESEQTKKREKIHIPERSDEAQRVFKSSKTSSCDKSDTCF. The span at 287–312 shows a compositional bias: basic and acidic residues; sequence MEREESEQTKKREKIHIPERSDEAQR.

As to quaternary structure, homodimer. Interacts with MARCH8. Interacts (via cytoplasmic domain) with PHB1 and PHB2; the interactions increases after priming with CD40. Interacts with CD28. In terms of assembly, (Microbial infection) Interacts with adenovirus subgroup b fiber protein. (Microbial infection) Interacts with Orthopoxvirus OPG038/M2 protein, inhibiting the interaction with CTLA4 and CD28. Post-translationally, polyubiquitinated; which is promoted by MARCH8 and results in endocytosis and lysosomal degradation. As to expression, expressed by activated B-lymphocytes and monocytes.

It is found in the cell membrane. Its function is as follows. Receptor involved in the costimulatory signal essential for T-lymphocyte proliferation and interleukin-2 production, by binding CD28 or CTLA-4. May play a critical role in the early events of T-cell activation and costimulation of naive T-cells, such as deciding between immunity and anergy that is made by T-cells within 24 hours after activation. Also involved in the regulation of B cells function, plays a role in regulating the level of IgG(1) produced. Upon CD40 engagement, activates NF-kappa-B signaling pathway via phospholipase C and protein kinase C activation. Functionally, interferes with the formation of CD86 clusters, and thus acts as a negative regulator of T-cell activation. (Microbial infection) Acts as a receptor for adenovirus subgroup B. The protein is T-lymphocyte activation antigen CD86 (CD86) of Homo sapiens (Human).